We begin with the raw amino-acid sequence, 104 residues long: Large ribosomal subunit protein uL24 (104 aa).

The protein belongs to the universal ribosomal protein uL24 family. As to quaternary structure, part of the 50S ribosomal subunit.

In terms of biological role, one of two assembly initiator proteins, it binds directly to the 5'-end of the 23S rRNA, where it nucleates assembly of the 50S subunit. Functionally, one of the proteins that surrounds the polypeptide exit tunnel on the outside of the subunit. This Halothermothrix orenii (strain H 168 / OCM 544 / DSM 9562) protein is Large ribosomal subunit protein uL24.